The chain runs to 373 residues: 3 beta-hydroxysteroid dehydrogenase/Delta 5--&gt;4-isomerase (373 aa).

Tyr155 functions as the Proton acceptor in the catalytic mechanism. Residue Lys159 participates in NAD(+) binding. Residues 288–308 (ISLEYWLAFLLEIVSFLLSPI) form a helical membrane-spanning segment.

It belongs to the 3-beta-HSD family.

It localises to the endoplasmic reticulum membrane. The protein localises to the mitochondrion membrane. It carries out the reaction a 3beta-hydroxy-Delta(5)-steroid + NAD(+) = a 3-oxo-Delta(5)-steroid + NADH + H(+). It catalyses the reaction a 3-oxo-Delta(5)-steroid = a 3-oxo-Delta(4)-steroid. It participates in lipid metabolism; steroid biosynthesis. In terms of biological role, 3-beta-HSD is a bifunctional enzyme, that catalyzes the oxidative conversion of Delta(5)-ene-3-beta-hydroxy steroid, and the oxidative conversion of ketosteroids. The 3-beta-HSD enzymatic system plays a crucial role in the biosynthesis of all classes of hormonal steroids. The polypeptide is 3 beta-hydroxysteroid dehydrogenase/Delta 5--&gt;4-isomerase (HSD3B) (Canis lupus familiaris (Dog)).